The chain runs to 122 residues: UPF0145 protein BceJ2315_57450 (122 aa).

It belongs to the UPF0145 family.

The protein is UPF0145 protein BceJ2315_57450 of Burkholderia cenocepacia (strain ATCC BAA-245 / DSM 16553 / LMG 16656 / NCTC 13227 / J2315 / CF5610) (Burkholderia cepacia (strain J2315)).